Reading from the N-terminus, the 404-residue chain is Argininosuccinate synthase (404 aa).

ATP contacts are provided by residues 11 to 19 (AYSGGLDTS) and Ala40. Residues Tyr92 and Ser97 each contribute to the L-citrulline site. Gly122 serves as a coordination point for ATP. Thr124, Asn128, and Asp129 together coordinate L-aspartate. Asn128 serves as a coordination point for L-citrulline. Residues Arg132, Ser181, Ser190, Glu266, and Tyr278 each coordinate L-citrulline.

It belongs to the argininosuccinate synthase family. Type 1 subfamily. As to quaternary structure, homotetramer.

The protein resides in the cytoplasm. The catalysed reaction is L-citrulline + L-aspartate + ATP = 2-(N(omega)-L-arginino)succinate + AMP + diphosphate + H(+). It functions in the pathway amino-acid biosynthesis; L-arginine biosynthesis; L-arginine from L-ornithine and carbamoyl phosphate: step 2/3. The chain is Argininosuccinate synthase from Moritella abyssi.